Consider the following 106-residue polypeptide: N(2)-fixation sustaining protein CowN (106 aa).

It belongs to the CowN family.

Functionally, is required to sustain N(2)-dependent growth in the presence of low levels of carbon monoxide (CO). Probably acts by protecting the N(2) fixation ability of the nitrogenase complex, which is inactivated in the presence of CO. In Denitrovibrio acetiphilus (strain DSM 12809 / NBRC 114555 / N2460), this protein is N(2)-fixation sustaining protein CowN.